The primary structure comprises 122 residues: Large ribosomal subunit protein bL12 (122 aa).

The protein belongs to the bacterial ribosomal protein bL12 family. In terms of assembly, homodimer. Part of the ribosomal stalk of the 50S ribosomal subunit. Forms a multimeric L10(L12)X complex, where L10 forms an elongated spine to which 2 to 4 L12 dimers bind in a sequential fashion. Binds GTP-bound translation factors.

Its function is as follows. Forms part of the ribosomal stalk which helps the ribosome interact with GTP-bound translation factors. Is thus essential for accurate translation. This Bdellovibrio bacteriovorus (strain ATCC 15356 / DSM 50701 / NCIMB 9529 / HD100) protein is Large ribosomal subunit protein bL12.